The primary structure comprises 184 residues: Shikimate kinase (184 aa).

12 to 17 (GSGKST) contacts ATP. Ser16 is a Mg(2+) binding site. Substrate-binding residues include Asp34, Arg58, and Gly80. Arg117 serves as a coordination point for ATP. Arg136 provides a ligand contact to substrate. Arg153 contacts ATP. The tract at residues 163–184 (MSRLDDPTPNTSPSSTASGAAT) is disordered. The span at 169–184 (PTPNTSPSSTASGAAT) shows a compositional bias: low complexity.

The protein belongs to the shikimate kinase family. As to quaternary structure, monomer. It depends on Mg(2+) as a cofactor.

It localises to the cytoplasm. It carries out the reaction shikimate + ATP = 3-phosphoshikimate + ADP + H(+). It participates in metabolic intermediate biosynthesis; chorismate biosynthesis; chorismate from D-erythrose 4-phosphate and phosphoenolpyruvate: step 5/7. Its function is as follows. Catalyzes the specific phosphorylation of the 3-hydroxyl group of shikimic acid using ATP as a cosubstrate. This Mycobacterium marinum (strain ATCC BAA-535 / M) protein is Shikimate kinase.